The following is a 615-amino-acid chain: Erythritol-mannosyl-transferase 1 (615 aa).

Residues 366 to 387 (RTPNNTGASTPTAPISSPDFEE) are disordered. A compositionally biased stretch (polar residues) spans 367 to 380 (TPNNTGASTPTAPI).

Belongs to the UDP-glycosyltransferase family.

The protein resides in the vacuole membrane. The protein operates within secondary metabolite biosynthesis. Erythritol-mannosyl-transferase; part of the gene cluster that mediates the biosynthesis of mannosylerythritol lipids (MELs), surface-active substances that enhance the availability of water-insoluble substrates. Mannosylerythritol lipid production is responsible for hemolytic activity of Ustilago maydis. Depending on the number of acetyl groups, mannosylerythritol lipids can be differentiated into MEL A (fully acetylated), MEL B and MEL C (monoacetylated at R-6 and R-4, respectively), and the fully deacetylated MEL D. The first step in the pathway is the generation of mannosylerythritol by the glycosyltransferase EMT1 which catalyzes the transfer of GDP-mannose to the C-4 atom of meso-erythritol. This reaction has to be stereospecific, since only mannosyl-D-erythritol is generated. The produced disaccharide is subsequently acylated with fatty acids of various lengths derived from the peroxisomal beta-oxidation by the peroxisomal acyltransferases MAC1 and MAC2 at positions C-2 and C-3, repectively. The existence of MEL derivatives which carry an acetyl group at C-2 implies that at least MAC1 also accepts acetyl-CoA as a donor. The final step of MEL biosynthesis is the acetylation of the fully acylated mannosylerythritol lipids catalyzed by the acetyl-CoA-dependent acetyltransferase MAT1. MAT1 displays a relaxed regioselectivity and is able to transfer acetylgroups to both positions C-4 and C-6 of the mannosyl moiety. This Mycosarcoma maydis (Corn smut fungus) protein is Erythritol-mannosyl-transferase 1.